The chain runs to 698 residues: Epithelial sodium channel subunit alpha (698 aa).

The segment at 1 to 70 is disordered; the sequence is MLDHTRAPEL…SAPRQPTEEE (70 aa). Over 1 to 110 the chain is Cytoplasmic; that stretch reads MLDHTRAPEL…CSKHNRMKTA (110 aa). The helical transmembrane segment at 111-131 threads the bilayer; sequence FWAVLWLCTFGMMYWQFALLF. The Extracellular portion of the chain corresponds to 132-589; the sequence is EEYLSYPVSL…SQWSLWFGSS (458 aa). 3 cysteine pairs are disulfide-bonded: cysteine 158/cysteine 332, cysteine 256/cysteine 263, and cysteine 309/cysteine 316. A glycan (N-linked (GlcNAc...) asparagine) is linked at asparagine 190. A gating release of inhibition by proteolysis (GRIP); protease-sensitive region that is responsible for the proteolytic activation of the channel region spans residues 200-270; that stretch reads RRRSSRDLLG…SDCFYQTYSS (71 aa). A disordered region spans residues 213–243; sequence HPLQRLRTPPPPYSGRTARSGSSSVRDNNPQ. Residues 229-243 show a composition bias toward polar residues; it reads TARSGSSSVRDNNPQ. Residue asparagine 259 is glycosylated (N-linked (GlcNAc...) asparagine). N-linked (GlcNAc...) asparagine glycosylation is found at asparagine 320, asparagine 339, and asparagine 424. Disulfide bonds link cysteine 421/cysteine 506, cysteine 443/cysteine 483, cysteine 443/cysteine 502, cysteine 447/cysteine 498, cysteine 456/cysteine 483, cysteine 456/cysteine 506, and cysteine 458/cysteine 472. A glycan (N-linked (GlcNAc...) asparagine) is linked at asparagine 538. The chain crosses the membrane as a helical span at residues 590–610; sequence VLSVVEMAELIFDLLVITLLM. Residues 611–698 are Cytoplasmic-facing; the sequence is LLRRFRSRYW…DCSACALAAL (88 aa). The segment at 637 to 663 is disordered; it reads ASSFPSRFCPHPTSPPPSLPQQGMTPP. Positions 669 to 673 match the PY motif; recruits WW domain-containing proteins and is thereby required for ubiquitination and inhibition of the channel by NEDD4 and NEDD4L motif; it reads PPPAY.

Belongs to the amiloride-sensitive sodium channel (TC 1.A.6) family. SCNN1A subfamily. In terms of assembly, heterotrimer; containing an alpha/SCNN1A, a beta/SCNN1B and a gamma/SCNN1G subunit. Interacts with WWP1 (via WW domains). Interacts with WWP2 (via WW domains); inhibits the channel. Interacts with BPIFA1; the interaction is indirect via SCNN1B and inhibits the proteolytic processing of SCNN1A and SCNN1G and the activation of ENaC. Interacts with the full-length immature form of PCSK9 (pro-PCSK9). In terms of processing, ubiquitinated. Can be ubiquitinated at multiple sites and undergo monoubiquitination and polyubiquitination. Ubiquitination by NEDD4 or NEDD4L inhibits the ENaC channel through endocytosis, intracellular retention and degradation of its individual subunits. N-glycosylated. Post-translationally, ENaC is activated through the proteolytic maturation of its subunits. Furin cleaves the SCNN1A subunit, which results in a stepwise increase in the open probability of the channel due to the release of an inhibitory tract. BPIFA1, which is recruited by the SCNN1B subunit, prevents the proteolytic activation of ENaC. Detected in kidney, lung and testis (at protein level). In the testis, detected within the seminiferous tubules but not in the interstitial cells (at protein level).

The protein localises to the apical cell membrane. It localises to the cell projection. Its subcellular location is the cilium. It is found in the cytoplasmic granule. The protein resides in the cytoplasm. The protein localises to the cytoplasmic vesicle. It localises to the secretory vesicle. Its subcellular location is the acrosome. It is found in the flagellum. It carries out the reaction Na(+)(in) = Na(+)(out). Its activity is regulated as follows. Originally identified and characterized by its inhibition by the diuretic drug amiloride. Its function is as follows. This is one of the three pore-forming subunits of the heterotrimeric epithelial sodium channel (ENaC), a critical regulator of sodium balance and fluid homeostasis. ENaC operates in epithelial tissues, where it mediates the electrodiffusion of sodium ions from extracellular fluid through the apical membrane of cells, with water following osmotically. It plays a key role in maintaining sodium homeostasis through electrogenic sodium reabsorption in the kidneys. Additionally, ENaC is essential for airway surface liquid homeostasis, which is crucial for proper mucus clearance. The sequence is that of Epithelial sodium channel subunit alpha from Rattus norvegicus (Rat).